The following is a 281-amino-acid chain: Arabinooligosaccharides transport system permease protein AraQ (281 aa).

6 helical membrane passes run 15 to 35 (LTLFFMMLSLLYLFPIFCLLL), 81 to 101 (LVLGLFTTVLTLFFSSMIGYG), 112 to 132 (IIFVLVLIIMMVPLEVMMLPL), 142 to 162 (IDSYTGVILPFIVSPVAVFFF), 185 to 205 (FGIFFRIMAPLMKPAFGAMII), and 247 to 267 (MLISGSVFAILPVIIIFLFFQ). The ABC transmembrane type-1 domain maps to 77–266 (FFNSLVLGLF…LPVIIIFLFF (190 aa)).

Belongs to the binding-protein-dependent transport system permease family. MalFG subfamily. In terms of assembly, the complex is composed of two ATP-binding proteins (MsmX), two transmembrane proteins (AraP and AraQ) and a solute-binding protein (AraN).

Its subcellular location is the cell membrane. Its function is as follows. Part of the ABC transporter complex AraNPQ involved in the uptake of arabinooligosaccharides. Transports alpha-1,5-arabinooligosaccharides, at least up to four L-arabinosyl units. Responsible for the translocation of the substrate across the membrane. This Bacillus subtilis (strain 168) protein is Arabinooligosaccharides transport system permease protein AraQ.